The following is a 392-amino-acid chain: Keratin, type I cuticular Ha4 (392 aa).

Residues 1-56 are head; that stretch reads MSCESCLPALSCRTSCSSRPCVPPSCHGCTLPGACNIPANVGNCNWFCEGSFNGNE. Positions 56–367 constitute an IF rod domain; the sequence is EKETMQFLND…SLLESEDCNL (312 aa). The coil 1A stretch occupies residues 57-91; it reads KETMQFLNDRLASYMEKVRQLERENAELECRIQER. The tract at residues 92–102 is linker 1; that stretch reads NQQQDPLVCPA. The tract at residues 103-203 is coil 1B; it reads YQAYFRTIEE…HEEEVNTLRC (101 aa). Residues 204-219 are linker 12; the sequence is QLGDRLNVEVDAAPTV. The coil 2 stretch occupies residues 220-363; it reads DLNRVLNETR…NTYRSLLESE (144 aa). Residues 364–392 are tail; the sequence is DCNLPCNPCATTNASGSCCGPCGSSKRCC.

The protein belongs to the intermediate filament family. Expressed in the hair root in the hair shaft cuticle and cortex.

The polypeptide is Keratin, type I cuticular Ha4 (Mus musculus (Mouse)).